The following is a 361-amino-acid chain: Phosphoserine aminotransferase (361 aa).

An L-glutamate-binding site is contributed by Arg42. Pyridoxal 5'-phosphate contacts are provided by residues 76–77, Trp102, Thr152, Asp172, and Gln195; that span reads AT. Residue Lys196 is modified to N6-(pyridoxal phosphate)lysine. 237–238 is a pyridoxal 5'-phosphate binding site; it reads NT.

It belongs to the class-V pyridoxal-phosphate-dependent aminotransferase family. SerC subfamily. In terms of assembly, homodimer. Pyridoxal 5'-phosphate serves as cofactor.

It localises to the cytoplasm. The enzyme catalyses O-phospho-L-serine + 2-oxoglutarate = 3-phosphooxypyruvate + L-glutamate. It carries out the reaction 4-(phosphooxy)-L-threonine + 2-oxoglutarate = (R)-3-hydroxy-2-oxo-4-phosphooxybutanoate + L-glutamate. Its pathway is amino-acid biosynthesis; L-serine biosynthesis; L-serine from 3-phospho-D-glycerate: step 2/3. It functions in the pathway cofactor biosynthesis; pyridoxine 5'-phosphate biosynthesis; pyridoxine 5'-phosphate from D-erythrose 4-phosphate: step 3/5. In terms of biological role, catalyzes the reversible conversion of 3-phosphohydroxypyruvate to phosphoserine and of 3-hydroxy-2-oxo-4-phosphonooxybutanoate to phosphohydroxythreonine. The chain is Phosphoserine aminotransferase from Xanthomonas oryzae pv. oryzae (strain MAFF 311018).